Consider the following 593-residue polypeptide: Elongation factor 4 (593 aa).

The 180-residue stretch at 2–181 folds into the tr-type G domain; the sequence is DKIRNFCIIA…AVIERIPHPQ (180 aa). GTP contacts are provided by residues 14–19 and 128–131; these read DHGKST and NKCD.

Belongs to the TRAFAC class translation factor GTPase superfamily. Classic translation factor GTPase family. LepA subfamily.

The protein resides in the cell inner membrane. It carries out the reaction GTP + H2O = GDP + phosphate + H(+). Functionally, required for accurate and efficient protein synthesis under certain stress conditions. May act as a fidelity factor of the translation reaction, by catalyzing a one-codon backward translocation of tRNAs on improperly translocated ribosomes. Back-translocation proceeds from a post-translocation (POST) complex to a pre-translocation (PRE) complex, thus giving elongation factor G a second chance to translocate the tRNAs correctly. Binds to ribosomes in a GTP-dependent manner. This is Elongation factor 4 from Bacteroides fragilis (strain ATCC 25285 / DSM 2151 / CCUG 4856 / JCM 11019 / LMG 10263 / NCTC 9343 / Onslow / VPI 2553 / EN-2).